We begin with the raw amino-acid sequence, 132 residues long: MTMTDPIADMLTRLRNGNSAYHDEVVMPHSKLKANIAEILKREGYVSGYRTEQGEKGQNLVVELKYGPNRERSIAGLRRVSKPGLRVYAKSTNLPKVLGGLGIAIISTSGGLLTDRQAIKQGVGGEVLAYAW.

The protein belongs to the universal ribosomal protein uS8 family. In terms of assembly, part of the 30S ribosomal subunit. Contacts proteins S5 and S12.

One of the primary rRNA binding proteins, it binds directly to 16S rRNA central domain where it helps coordinate assembly of the platform of the 30S subunit. In Saccharopolyspora erythraea (strain ATCC 11635 / DSM 40517 / JCM 4748 / NBRC 13426 / NCIMB 8594 / NRRL 2338), this protein is Small ribosomal subunit protein uS8.